A 545-amino-acid polypeptide reads, in one-letter code: Calcium-binding mitochondrial carrier SAL1 (545 aa).

In terms of domain architecture, EF-hand 1 spans 11–46 (QRDIRYACLFKELDVKGNGQVTLDNLISAFEKNDHP). The Ca(2+) site is built by Lys-65, Asp-70, Asp-93, Asp-95, Asp-97, Lys-99, and Glu-104. 3 consecutive EF-hand domains span residues 80–115 (NAESQIWNGFQRIDLDHDGKIGINEINRYLSDLDNQ), 120–155 (NELNHELSNEKMNKFSRFFEWAFPKRKANIALRGQA), and 156–191 (SHKKNTDNDRSKKTTDSDLYVTYDQWRDFLLLVPRK). The Ca(2+) site is built by Thr-161 and Ser-166. 3 Solcar repeats span residues 225-332 (IRGF…TKKI), 345-434 (LSKF…LKKW), and 452-541 (LSNL…LKKF). Transmembrane regions (helical) follow at residues 231–248 (FIAGGISGVISRTCTAPF), 307–326 (GNGLNVIKVFPESSIKFGSF), 355–368 (GLAGMAAQFSVYPI), 409–428 (GVTVGIVGIFPYAALDLGTF), 458–475 (LPMGAFSGTVGASVVYPI), and 516–535 (GLVPTLAKVCPAVSISYLCY).

It belongs to the mitochondrial carrier (TC 2.A.29) family.

Its subcellular location is the mitochondrion inner membrane. Functionally, calcium-dependent mitochondrial solute carrier. The sequence is that of Calcium-binding mitochondrial carrier SAL1 (SAL1) from Saccharomyces cerevisiae (Baker's yeast).